The chain runs to 67 residues: Large ribosomal subunit protein bL32 (67 aa).

Over residues 1–19 (MAVPKRKMSRSNTRARRSQ) the composition is skewed to basic residues. Positions 1-21 (MAVPKRKMSRSNTRARRSQWK) are disordered.

The protein belongs to the bacterial ribosomal protein bL32 family.

In Arthrobacter sp. (strain FB24), this protein is Large ribosomal subunit protein bL32.